The chain runs to 242 residues: Sugar fermentation stimulation protein homolog (242 aa).

This sequence belongs to the SfsA family.

In Methanosphaera stadtmanae (strain ATCC 43021 / DSM 3091 / JCM 11832 / MCB-3), this protein is Sugar fermentation stimulation protein homolog.